The sequence spans 98 residues: NADH-ubiquinone oxidoreductase chain 4L (98 aa).

Transmembrane regions (helical) follow at residues 1-21, 29-49, and 61-81; these read MTLVYMNMALAFTISLLGLLM, SLLCLEGMMLSLFVTMAVTIL, and IILLVFAACEAALGLSLLVMV.

It belongs to the complex I subunit 4L family. As to quaternary structure, core subunit of respiratory chain NADH dehydrogenase (Complex I) which is composed of 45 different subunits.

The protein localises to the mitochondrion inner membrane. The catalysed reaction is a ubiquinone + NADH + 5 H(+)(in) = a ubiquinol + NAD(+) + 4 H(+)(out). Its function is as follows. Core subunit of the mitochondrial membrane respiratory chain NADH dehydrogenase (Complex I) which catalyzes electron transfer from NADH through the respiratory chain, using ubiquinone as an electron acceptor. Part of the enzyme membrane arm which is embedded in the lipid bilayer and involved in proton translocation. The chain is NADH-ubiquinone oxidoreductase chain 4L (MT-ND4L) from Rousettus aegyptiacus (Egyptian fruit bat).